Consider the following 183-residue polypeptide: Inner membrane protein p54 (183 aa).

Residues 32–52 traverse the membrane as a helical segment; the sequence is YTILIAIVVLVIIIIVLIYLF. The segment at 81–157 is disordered; the sequence is EVTPQPGTSK…PYTTVTTQNT (77 aa). Polar residues predominate over residues 111–122; that stretch reads RPATNKPVTDNP. Positions 130–143 are enriched in low complexity; it reads ATGGPAAAPAAASA. The interaction with host DYNLL1 stretch occupies residues 149-161; that stretch reads YTTVTTQNTASQT.

The protein belongs to the asfivirus envelope protein p54 family. As to quaternary structure, interacts with the host light chain cytoplasmic dynein DYNLL1; this interaction is critical for intracellular microtubule-dependent virus transport toward viral factories.

It localises to the virion membrane. It is found in the host cytoplasm. The protein localises to the host cytoskeleton. Its subcellular location is the host endoplasmic reticulum membrane. Inner envelope protein involved, through its interaction with host dynein, in the intracellular microtubule-dependent transport of viral capsid toward viral factories. Seems to induce caspase-3 activation and apoptosis. Plays a role in virion morphogenesis by recruiting and transforming the host ER membranes into the precursors of the viral envelope. Involved in virus attachment to the host cell. The chain is Inner membrane protein p54 from African swine fever virus (strain Badajoz 1971 Vero-adapted) (Ba71V).